Consider the following 278-residue polypeptide: Phosphonates import ATP-binding protein PhnC 2 (278 aa).

Residues 5–253 (IRVDSLNKTF…FLNELYGAEG (249 aa)) enclose the ABC transporter domain. An ATP-binding site is contributed by 37-44 (GASGSGKS).

This sequence belongs to the ABC transporter superfamily. Phosphonates importer (TC 3.A.1.9.1) family. As to quaternary structure, the complex is composed of two ATP-binding proteins (PhnC), two transmembrane proteins (PhnE) and a solute-binding protein (PhnD).

The protein localises to the cell inner membrane. It catalyses the reaction phosphonate(out) + ATP + H2O = phosphonate(in) + ADP + phosphate + H(+). In terms of biological role, part of the ABC transporter complex PhnCDE involved in phosphonates import. Responsible for energy coupling to the transport system. This chain is Phosphonates import ATP-binding protein PhnC 2, found in Pseudomonas aeruginosa (strain ATCC 15692 / DSM 22644 / CIP 104116 / JCM 14847 / LMG 12228 / 1C / PRS 101 / PAO1).